We begin with the raw amino-acid sequence, 401 residues long: Tryptophan synthase beta chain (401 aa).

The residue at position 92 (Lys-92) is an N6-(pyridoxal phosphate)lysine.

The protein belongs to the TrpB family. Tetramer of two alpha and two beta chains. The cofactor is pyridoxal 5'-phosphate.

It catalyses the reaction (1S,2R)-1-C-(indol-3-yl)glycerol 3-phosphate + L-serine = D-glyceraldehyde 3-phosphate + L-tryptophan + H2O. Its pathway is amino-acid biosynthesis; L-tryptophan biosynthesis; L-tryptophan from chorismate: step 5/5. In terms of biological role, the beta subunit is responsible for the synthesis of L-tryptophan from indole and L-serine. The protein is Tryptophan synthase beta chain of Ruthia magnifica subsp. Calyptogena magnifica.